The sequence spans 81 residues: Defensin-like protein 266 (81 aa).

The first 26 residues, 1-26, serve as a signal peptide directing secretion; that stretch reads MEKIVFRKIVFVAFLLSLSCLLEGEA. Disulfide bonds link C40-C58, C46-C63, and C50-C65.

Belongs to the DEFL family.

It localises to the secreted. This is Defensin-like protein 266 from Arabidopsis thaliana (Mouse-ear cress).